Consider the following 146-residue polypeptide: UPF0260 protein Spea_2441 (146 aa).

It belongs to the UPF0260 family.

The chain is UPF0260 protein Spea_2441 from Shewanella pealeana (strain ATCC 700345 / ANG-SQ1).